Consider the following 328-residue polypeptide: DNA-directed RNA polymerase subunit alpha 1 (328 aa).

Positions 1-234 (MQGFVKDFLK…GQLDEFVDER (234 aa)) are alpha N-terminal domain (alpha-NTD). The segment at 248 to 328 (FDPILLRPVN…NWPPASLIED (81 aa)) is alpha C-terminal domain (alpha-CTD).

Belongs to the RNA polymerase alpha chain family. Homodimer. The RNAP catalytic core consists of 2 alpha, 1 beta, 1 beta' and 1 omega subunit. When a sigma factor is associated with the core the holoenzyme is formed, which can initiate transcription.

It catalyses the reaction RNA(n) + a ribonucleoside 5'-triphosphate = RNA(n+1) + diphosphate. In terms of biological role, DNA-dependent RNA polymerase catalyzes the transcription of DNA into RNA using the four ribonucleoside triphosphates as substrates. The chain is DNA-directed RNA polymerase subunit alpha 1 from Psychromonas ingrahamii (strain DSM 17664 / CCUG 51855 / 37).